The following is a 1035-amino-acid chain: FACT complex subunit SPT16 (1035 aa).

A coiled-coil region spans residues 432–500; that stretch reads FLKKEDEEEE…AKRRLTEQKG (69 aa). Disordered stretches follow at residues 491 to 520 and 920 to 1035; these read AKRRLTEQKGGQQTMKARKSNVSYKNASQV and EQGG…KRKK. Residues 499 to 519 are compositionally biased toward polar residues; it reads KGGQQTMKARKSNVSYKNASQ. The segment covering 929–985 has biased composition (acidic residues); it reads PDGEGSDAAEGDSESELDDETFNPSEDEEEEEEDSDEDYSDETEDSVDSEESADSEE. Basic and acidic residues predominate over residues 986 to 1006; sequence ESGKDWDELEEEARKADRESL.

Belongs to the peptidase M24 family. SPT16 subfamily. As to quaternary structure, component of the FACT complex (also called the DUF complex), a stable heterodimer of ssrp1 and supt16h. May also be a component of a ck2-spt16-ssrp1 complex composed of ssrp1, supt16h, csnk2a1, csnk2a2 and csnk2b. The FACT complex may also interact with vcp.

It is found in the nucleus. The protein resides in the chromosome. Functionally, component of the FACT complex, a general chromatin factor that acts to reorganize nucleosomes. The FACT complex is involved in multiple processes that require DNA as a template such as mRNA elongation, DNA replication and DNA repair. During transcription elongation the FACT complex acts as a histone chaperone that both destabilizes and restores nucleosomal structure. It facilitates the passage of RNA polymerase II and transcription by promoting the dissociation of one histone H2A-H2B dimer from the nucleosome, then subsequently promotes the reestablishment of the nucleosome following the passage of RNA polymerase II. This chain is FACT complex subunit SPT16 (supt16h), found in Xenopus laevis (African clawed frog).